Here is a 679-residue protein sequence, read N- to C-terminus: Methionine--tRNA ligase (679 aa).

The 'HIGH' region motif lies at 14 to 24 (PYANGSIHLGH). Residues cysteine 145, cysteine 148, cysteine 158, and cysteine 161 each coordinate Zn(2+). Positions 331-335 (KMSKS) match the 'KMSKS' region motif. Lysine 334 contributes to the ATP binding site. Positions 577–679 (TFAAVDLRVA…SGAKPGQRIK (103 aa)) constitute a tRNA-binding domain.

It belongs to the class-I aminoacyl-tRNA synthetase family. MetG type 1 subfamily. As to quaternary structure, homodimer. It depends on Zn(2+) as a cofactor.

The protein localises to the cytoplasm. It catalyses the reaction tRNA(Met) + L-methionine + ATP = L-methionyl-tRNA(Met) + AMP + diphosphate. In terms of biological role, is required not only for elongation of protein synthesis but also for the initiation of all mRNA translation through initiator tRNA(fMet) aminoacylation. This Pseudomonas putida (strain GB-1) protein is Methionine--tRNA ligase.